We begin with the raw amino-acid sequence, 73 residues long: Large ribosomal subunit protein uL29 (73 aa).

Belongs to the universal ribosomal protein uL29 family.

The sequence is that of Large ribosomal subunit protein uL29 (rpl29) from Saccharolobus solfataricus (strain ATCC 35092 / DSM 1617 / JCM 11322 / P2) (Sulfolobus solfataricus).